We begin with the raw amino-acid sequence, 97 residues long: Mapk-regulated corepressor-interacting protein 1 (97 aa).

The interval 1 to 29 is disordered; that stretch reads MTSSPVSRVVYNGKRNSSPRSPTNSSEIF. A compositionally biased stretch (low complexity) spans 15–26; that stretch reads RNSSPRSPTNSS. Ser21 is subject to Phosphoserine. Phosphothreonine is present on Thr30. Tyr41 bears the Phosphotyrosine mark. Position 79 is an N6-acetyllysine (Lys79). The PXDLS motif signature appears at 80 to 84; that stretch reads PIDLS.

The protein belongs to the MCRIP family. Interacts (unphosphorylated form, via the PXDLS motif) with CTBP1, competitively inhibiting CTBP-ZEB1 interaction. Interacts with CTBP2. Interacts with MCRIP2. Interacts with DDX6. Post-translationally, phosphorylation by MAPK3/1 (ERK1/2) regulates MCRIP1 binding to CTBP(s). In terms of tissue distribution, widely expressed (at protein level).

The protein resides in the nucleus. It is found in the cytoplasm. Its subcellular location is the stress granule. The phosphorylation status of MCRIP1 functions as a molecular switch to regulate epithelial-mesenchymal transition. Unphosphorylated MCRIP1 binds to and inhibits the transcriptional corepressor CTBP(s). When phosphorylated by MAPK/ERK, MCRIP1 releases CTBP(s) resulting in transcriptional silencing of the E-cadherin gene and induction of epithelial-mesenchymal transition. The sequence is that of Mapk-regulated corepressor-interacting protein 1 (Mcrip1) from Mus musculus (Mouse).